The following is an 80-amino-acid chain: Putative DNA-directed RNA polymerase subunit omega (80 aa).

The protein belongs to the RNA polymerase subunit omega family.

Its subcellular location is the plastid. The protein localises to the chloroplast. The enzyme catalyses RNA(n) + a ribonucleoside 5'-triphosphate = RNA(n+1) + diphosphate. Functionally, may be involved in RNA polymerase activity. This chain is Putative DNA-directed RNA polymerase subunit omega, found in Gracilaria tenuistipitata var. liui (Red alga).